The chain runs to 30 residues: Cyclotide cter-Q (30 aa).

Residues 1-30 (GIPCGESCVFIPCISTVIGCSCKNKVCYRN) constitute a cross-link (cyclopeptide (Gly-Asn)). 3 disulfide bridges follow: Cys-4/Cys-20, Cys-8/Cys-22, and Cys-13/Cys-27.

In terms of processing, this is a cyclic peptide.

The protein resides in the secreted. Its function is as follows. Probably participates in a plant defense mechanism. The protein is Cyclotide cter-Q of Clitoria ternatea (Butterfly pea).